The following is a 136-amino-acid chain: Large ribosomal subunit protein uL16 (136 aa).

This sequence belongs to the universal ribosomal protein uL16 family. As to quaternary structure, part of the 50S ribosomal subunit.

Binds 23S rRNA and is also seen to make contacts with the A and possibly P site tRNAs. The sequence is that of Large ribosomal subunit protein uL16 from Ruthia magnifica subsp. Calyptogena magnifica.